We begin with the raw amino-acid sequence, 246 residues long: C-X-C motif chemokine 16 (246 aa).

The first 26 residues, 1 to 26 (MRRGFGPLSLAFFLFLLALLTLPGDG), serve as a signal peptide directing secretion. At 27 to 201 (NQGSVAGSCS…PGAGASTPAW (175 aa)) the chain is on the extracellular side. 2 disulfide bridges follow: cysteine 35-cysteine 65 and cysteine 37-cysteine 79. 2 disordered regions span residues 104-150 (GKSF…SGAL) and 175-198 (PEAE…GAST). Positions 128-146 (PSDTSTPAHSQSTQHSTLP) are enriched in polar residues. A compositionally biased stretch (basic and acidic residues) spans 175–189 (PEAEANEKQQDDRQQ). Residues 202-222 (VPVLSLLAIVFFLTAAMAYVL) traverse the membrane as a helical segment. Over 223–246 (CNRRATQQNSAGLQLWYTPVEPRP) the chain is Cytoplasmic.

Belongs to the intercrine alpha (chemokine CxC) family. In terms of processing, glycosylated. Widely expressed. Not detected in purified B- and T-cells.

The protein resides in the membrane. In terms of biological role, induces a strong chemotactic response. Induces calcium mobilization. Binds to CXCR6/Bonzo. Also acts as a scavenger receptor on macrophages, which specifically binds to OxLDL (oxidized low density lipoprotein), suggesting that it may be involved in pathophysiology such as atherogenesis. This chain is C-X-C motif chemokine 16 (Cxcl16), found in Mus musculus (Mouse).